The sequence spans 226 residues: Large ribosomal subunit protein uL1 (226 aa).

The protein belongs to the universal ribosomal protein uL1 family. In terms of assembly, part of the 50S ribosomal subunit.

Its function is as follows. Binds directly to 23S rRNA. The L1 stalk is quite mobile in the ribosome, and is involved in E site tRNA release. In terms of biological role, protein L1 is also a translational repressor protein, it controls the translation of the L11 operon by binding to its mRNA. This Buchnera aphidicola subsp. Cinara cedri (strain Cc) protein is Large ribosomal subunit protein uL1.